A 350-amino-acid chain; its full sequence is MNPRGLFQDFNPSKFLIYACLLLFSVLLPLRLDGVIQWSYWAVFAPIWLWKLLVLAGASVGAGVWARNPRYRTEGEACVEFKAMLIAVGIHLLLLMFEVLVCDRVERGTHFWLLVFMPLFFVSPVSVAACVWGFRHDRSLELEILCSVNILQFIFIALRLDRIIHWPWLVVFVPLWILMSFLCLVVLYYIVWSLLFLRSLDVVAEQRRTHVTMAICWITIVVPLLIFEVLLVHRLDGHNMFSYISIFVPLWLSLITLMATTFRRKGGNHWWFGIRRDFCQFLLEIFPFLREYGNISYDLHHEDSEDAEETSAPEAPKIAPMFGKKARVVITQSPGKYVPPPPKLNIDMPD.

Helical transmembrane passes span 16-36 (LIYACLLLFSVLLPLRLDGVI), 41-61 (WAVFAPIWLWKLLVLAGASVG), 81-101 (FKAMLIAVGIHLLLLMFEVLV), 111-131 (FWLLVFMPLFFVSPVSVAACV), 168-188 (WLVVFVPLWILMSFLCLVVLY), 211-231 (VTMAICWITIVVPLLIFEVLL), and 240-260 (MFSYISIFVPLWLSLITLMAT).

It belongs to the TMEM185 family.

It localises to the membrane. The protein is Transmembrane protein 185B (TMEM185B) of Bos taurus (Bovine).